Consider the following 84-residue polypeptide: Cell division topological specificity factor (84 aa).

It belongs to the MinE family.

In terms of biological role, prevents the cell division inhibition by proteins MinC and MinD at internal division sites while permitting inhibition at polar sites. This ensures cell division at the proper site by restricting the formation of a division septum at the midpoint of the long axis of the cell. The polypeptide is Cell division topological specificity factor (Rhodopseudomonas palustris (strain BisA53)).